Here is a 473-residue protein sequence, read N- to C-terminus: MSLSRRQFIQASGLAMCLGALPFAVQANKSQPTKLPLPPLLESRGGQPLFLAIQKARWSFNGQNKVQVWGINGHYLGPTIRVHRGDDVKLIYSNRLSEDVAMTVGGLLLPGTLMGGSTRLMSPGESWSPVIPINQPAATCWYHANTPNRTAQHVYAGLAGMCLVEDEDSRRLPLPKHYGVDDFPVILQDKRLDNFGVPQYDPPANQGFLGDTLIVNGVENPFVEVARGWVRLRLLNASNARRYQLQLSDGRPFYMIGTDQGLLPAPVAVQQLPLAPGERREVLVDMSKVENVSITAGESASVMDRLKGLFEPSTKLVSTTVLTLKASGLLPLVTDQLPNQLVGDNPQISSSIRSRQLTLGDYSQGINSSILNESRIDITSQQGAWERWIITTSVPQPFHIEGVRFKVISFNGNRPEPQDYGWKDTVWIDERAELLVNMMQPSYAHFPFMYYSQILEMVDRGVAGQLVVNPAGF.

The tat-type signal signal peptide spans 1 to 27 (MSLSRRQFIQASGLAMCLGALPFAVQA).

This sequence belongs to the FtsP family. Predicted to be exported by the Tat system. The position of the signal peptide cleavage has not been experimentally proven.

The protein resides in the periplasm. In terms of biological role, cell division protein that is required for growth during stress conditions. May be involved in protecting or stabilizing the divisomal assembly under conditions of stress. The polypeptide is Cell division protein FtsP (Xenorhabdus nematophila (strain ATCC 19061 / DSM 3370 / CCUG 14189 / LMG 1036 / NCIMB 9965 / AN6)).